Here is a 129-residue protein sequence, read N- to C-terminus: Large ribosomal subunit protein uL22 (129 aa).

This sequence belongs to the universal ribosomal protein uL22 family. Part of the 50S ribosomal subunit.

In terms of biological role, this protein binds specifically to 23S rRNA; its binding is stimulated by other ribosomal proteins, e.g. L4, L17, and L20. It is important during the early stages of 50S assembly. It makes multiple contacts with different domains of the 23S rRNA in the assembled 50S subunit and ribosome. Its function is as follows. The globular domain of the protein is located near the polypeptide exit tunnel on the outside of the subunit, while an extended beta-hairpin is found that lines the wall of the exit tunnel in the center of the 70S ribosome. In Beijerinckia indica subsp. indica (strain ATCC 9039 / DSM 1715 / NCIMB 8712), this protein is Large ribosomal subunit protein uL22.